A 121-amino-acid chain; its full sequence is UPF0102 protein BF0706 (121 aa).

This sequence belongs to the UPF0102 family.

The polypeptide is UPF0102 protein BF0706 (Bacteroides fragilis (strain YCH46)).